Consider the following 339-residue polypeptide: N-acetyl-gamma-glutamyl-phosphate reductase (339 aa).

Residue Cys144 is part of the active site.

It belongs to the NAGSA dehydrogenase family. Type 1 subfamily.

It is found in the cytoplasm. It catalyses the reaction N-acetyl-L-glutamate 5-semialdehyde + phosphate + NADP(+) = N-acetyl-L-glutamyl 5-phosphate + NADPH + H(+). Its pathway is amino-acid biosynthesis; L-arginine biosynthesis; N(2)-acetyl-L-ornithine from L-glutamate: step 3/4. Its function is as follows. Catalyzes the NADPH-dependent reduction of N-acetyl-5-glutamyl phosphate to yield N-acetyl-L-glutamate 5-semialdehyde. In Methanobrevibacter smithii (strain ATCC 35061 / DSM 861 / OCM 144 / PS), this protein is N-acetyl-gamma-glutamyl-phosphate reductase.